Consider the following 383-residue polypeptide: Homoserine O-succinyltransferase (383 aa).

Residues 51–360 (NAILLCHALS…EAEHGHDSFL (310 aa)) form the AB hydrolase-1 domain. The Nucleophile role is filled by Ser157. Substrate is bound at residue Arg227. Residues Asp323 and His356 contribute to the active site. Position 357 (Asp357) interacts with substrate.

The protein belongs to the AB hydrolase superfamily. MetX family. Homodimer.

The protein resides in the cytoplasm. The enzyme catalyses L-homoserine + succinyl-CoA = O-succinyl-L-homoserine + CoA. The protein operates within amino-acid biosynthesis; L-methionine biosynthesis via de novo pathway; O-succinyl-L-homoserine from L-homoserine: step 1/1. Transfers a succinyl group from succinyl-CoA to L-homoserine, forming succinyl-L-homoserine. The sequence is that of Homoserine O-succinyltransferase from Acidithiobacillus ferrooxidans (strain ATCC 23270 / DSM 14882 / CIP 104768 / NCIMB 8455) (Ferrobacillus ferrooxidans (strain ATCC 23270)).